Here is a 214-residue protein sequence, read N- to C-terminus: Small ribosomal subunit protein eS1 (214 aa).

Belongs to the eukaryotic ribosomal protein eS1 family.

This Aeropyrum pernix (strain ATCC 700893 / DSM 11879 / JCM 9820 / NBRC 100138 / K1) protein is Small ribosomal subunit protein eS1.